The primary structure comprises 261 residues: Segregation and condensation protein A (261 aa).

This sequence belongs to the ScpA family. Component of a cohesin-like complex composed of ScpA, ScpB and the Smc homodimer, in which ScpA and ScpB bind to the head domain of Smc. The presence of the three proteins is required for the association of the complex with DNA.

The protein resides in the cytoplasm. Functionally, participates in chromosomal partition during cell division. May act via the formation of a condensin-like complex containing Smc and ScpB that pull DNA away from mid-cell into both cell halves. In Desulfitobacterium hafniense (strain DSM 10664 / DCB-2), this protein is Segregation and condensation protein A.